A 279-amino-acid polypeptide reads, in one-letter code: Tumor necrosis factor ligand superfamily member 6 (279 aa).

The Cytoplasmic segment spans residues 1–78 (MQQPMNYPCP…PLKKKDHNTN (78 aa)). The segment at 30-70 (FPCPSCGPRGPDQRRPPPPPPPVSPLPPPSQPLPLPPLTPL) is disordered. Over residues 45 to 68 (PPPPPPPVSPLPPPSQPLPLPPLT) the composition is skewed to pro residues. The chain crosses the membrane as a helical; Signal-anchor for type II membrane protein span at residues 79 to 100 (LWLPVVFFMVLVALVGMGLGMY). Over 101–279 (QLFHLQKELA…SKTFFGLYKL (179 aa)) the chain is Extracellular. An N-linked (GlcNAc...) asparagine glycan is attached at Asn117. Residues 126-135 (EKQIANPSTP) are compositionally biased toward polar residues. The disordered stretch occupies residues 126-150 (EKQIANPSTPSEKKEPRSVAHLTGN). Positions 143 to 279 (SVAHLTGNPH…SKTFFGLYKL (137 aa)) constitute a THD domain. Asn182 carries an N-linked (GlcNAc...) asparagine glycan. An intrachain disulfide couples Cys200 to Cys231. Asn248 and Asn258 each carry an N-linked (GlcNAc...) asparagine glycan.

Belongs to the tumor necrosis factor family. As to quaternary structure, homotrimer. Interacts with ARHGAP9, BAIAP2L1, BTK, CACNB3, CACNB4, CRK, DLG2, DNMBP, DOCK4, EPS8L3, FGR, FYB1, FYN, HCK, ITK, ITSN2, KALRN, LYN, MACC1, MIA, MPP4, MYO15A, NCF1, NCK1, NCK2, NCKIPSD, OSTF1, PIK3R1, PSTPIP1, RIMBP3C, SAMSN1, SH3GL3, SH3PXD2B, SH3PXD2A, SH3RF2, SKAP2, SNX33, SNX9, SORBS3, SPTA1, SRC, SRGAP1, SRGAP2, SRGAP3, TEC, TJP3 and YES1. In terms of processing, the soluble form derives from the membrane form by proteolytic processing. The membrane-bound form undergoes two successive intramembrane proteolytic cleavages. The first one is processed by ADAM10 producing an N-terminal fragment, which lacks the receptor-binding extracellular domain. This ADAM10-processed FasL (FAsL APL) remnant form is still membrane anchored and further processed by SPPL2A that liberates the FasL intracellular domain (FasL ICD). FasL shedding by ADAM10 is a prerequisite for subsequent intramembrane cleavage by SPPL2A in T-cells. Post-translationally, phosphorylated by FGR on tyrosine residues; this is required for ubiquitination and subsequent internalization. N-glycosylated. Glycosylation enhances apoptotic activity. In terms of processing, monoubiquitinated. As to expression, expressed in T-cells. Expressed in natural killer cells.

The protein localises to the cell membrane. It is found in the cytoplasmic vesicle lumen. It localises to the lysosome lumen. Its subcellular location is the secreted. The protein resides in the nucleus. Cytokine that binds to TNFRSF6/FAS, a receptor that transduces the apoptotic signal into cells. Involved in cytotoxic T-cell-mediated apoptosis, natural killer cell-mediated apoptosis and in T-cell development. Initiates fratricidal/suicidal activation-induced cell death (AICD) in antigen-activated T-cells contributing to the termination of immune responses. TNFRSF6/FAS-mediated apoptosis also has a role in the induction of peripheral tolerance. Binds to TNFRSF6B/DcR3, a decoy receptor that blocks apoptosis. In terms of biological role, induces FAS-mediated activation of NF-kappa-B, initiating non-apoptotic signaling pathways. Can induce apoptosis but does not appear to be essential for this process. Its function is as follows. Cytoplasmic form induces gene transcription inhibition. The chain is Tumor necrosis factor ligand superfamily member 6 (Faslg) from Mus musculus (Mouse).